Here is a 345-residue protein sequence, read N- to C-terminus: Glycosyltransferase 1 domain-containing protein 1 (345 aa).

The signal sequence occupies residues 1–19 (MKILFLACLRAHTGNSTTA). Residues asparagine 246 and asparagine 322 are each glycosylated (N-linked (GlcNAc...) asparagine).

It belongs to the glycosyltransferase group 1 family. Glycosyltransferase 4 subfamily.

The protein resides in the secreted. This Xenopus tropicalis (Western clawed frog) protein is Glycosyltransferase 1 domain-containing protein 1 (glt1d1).